A 444-amino-acid polypeptide reads, in one-letter code: RING finger and transmembrane domain-containing protein 2 (444 aa).

Residues 1–181 are Extracellular-facing; sequence MWLFTVNQVL…ILLAKLCFQH (181 aa). Disordered stretches follow at residues 13 to 41 and 92 to 149; these read MQRR…ASVD and PASR…PGTP. Over residues 107–121 the composition is skewed to basic residues; that stretch reads YHHRQPHHHFHHGGH. Over residues 131–140 the composition is skewed to basic and acidic residues; sequence GGDHRGHSEE. Residues 182-202 form a helical membrane-spanning segment; the sequence is KLGIAVCIGMASTFAYANSTL. At 203–214 the chain is on the cytoplasmic side; it reads REQVSLKEKRSV. Residues 215-235 form a helical membrane-spanning segment; the sequence is LVILWILAFLAGNTLYVLYTF. The Extracellular portion of the chain corresponds to 236–255; that stretch reads SSQQLYNSLIFLKPNLETLD. A helical transmembrane segment spans residues 256–276; the sequence is FFDLLWIVGIADFVLKYITIA. Residues 277–329 are Cytoplasmic-facing; it reads LKCLIVALPKIILAVKSKGKFYLVIEELSQLFRSLVPIQLWYKYIMGDDSSNS. The helical transmembrane segment at 330–350 threads the bilayer; that stretch reads YFLGGVLIVLYSLCKSFDICG. At 351–444 the chain is on the extracellular side; it reads RVGGVRKALK…GATSAHFQVY (94 aa). The segment at 384–422 adopts an RING-type; degenerate zinc-finger fold; the sequence is CAICQAEFREPLILLCQHVFCEECLCLWLDRERTCPLSR.

Its subcellular location is the membrane. Functionally, E3 ubiquitin-protein ligase that negatively regulates IL3-dependent cellular responses through IL3RA ubiquitination and degradation by the proteasome, having an anti-inflammatory effect. The polypeptide is RING finger and transmembrane domain-containing protein 2 (RNFT2) (Pongo abelii (Sumatran orangutan)).